We begin with the raw amino-acid sequence, 213 residues long: Glutathione S-transferase (213 aa).

Residues 4 to 81 form the GST N-terminal domain; sequence AKPILYGAWI…YLEDKYPQHP (78 aa). Residues 86–211 form the GST C-terminal domain; sequence DIKTKGLDLQ…LPQNQPDAPS (126 aa).

This sequence belongs to the GST superfamily. Zeta family.

Its subcellular location is the cytoplasm. The enzyme catalyses RX + glutathione = an S-substituted glutathione + a halide anion + H(+). Functionally, has a glutathione transferase activity with ethacrynic acid and nitrophenyl acetate. Has low glutathione peroxidase activity with cumene hydroperoxide. The sequence is that of Glutathione S-transferase (GSTZ1) from Triticum aestivum (Wheat).